The sequence spans 457 residues: Peptidyl-prolyl cis-trans isomerase FKBP5 (457 aa).

Residue M1 is modified to N-acetylmethionine. The tract at residues 1-26 (MTTDEGAKNNGESPTATVAEQGEDIT) is disordered. The residue at position 13 (S13) is a Phosphoserine. PPIase FKBP-type domains are found at residues 50-138 (GDKV…LDFK) and 165-251 (GATV…KSFE). 3 TPR repeats span residues 268 to 301 (AAIVKEKGTVYFKGGKYMQAVIQYGKIVSWLEME), 317 to 350 (LAAFLNLAMCYSKLREYTKAVECCDKALGLDSAN), and 351 to 384 (GKGLYRRGEAQLLMNEFESAKGDFEKVLEVNPQN). The interval 420–457 (DAKEEANKAMGKKTSEGVTNEKGTDSQAMEEEKPEGHV) is disordered. Residue S445 is modified to Phosphoserine.

As to quaternary structure, part of a heteromultimeric cytoplasmic complex with HSP90AA1, HSPA1A/HSPA1B and steroid receptors. Upon ligand binding dissociates from the complex and FKBP4 takes its place. Interacts with functionally mature heterooligomeric progesterone receptor complexes along with HSP90 and TEBP. Interacts with IFI44L; this interaction modulates the kinase activity of IKBKB and IKBKE. Interacts with IKBKB and IKBKE.

It is found in the cytoplasm. Its subcellular location is the nucleus. It catalyses the reaction [protein]-peptidylproline (omega=180) = [protein]-peptidylproline (omega=0). Inhibited by FK506 but not cyclosporin. In terms of biological role, immunophilin protein with PPIase and co-chaperone activities. Component of unligated steroid receptors heterocomplexes through interaction with heat-shock protein 90 (HSP90). Plays a role in the intracellular trafficking of heterooligomeric forms of steroid hormone receptors maintaining the complex into the cytoplasm when unliganded. Acts as a regulator of Akt/AKT1 activity by promoting the interaction between Akt/AKT1 and PHLPP1, thereby enhancing dephosphorylation and subsequent activation of Akt/AKT1. Interacts with IKBKE and IKBKB which facilitates IKK complex assembly leading to increased IKBKE and IKBKB kinase activity, NF-kappaB activation, and IFN production. This is Peptidyl-prolyl cis-trans isomerase FKBP5 (FKBP5) from Pongo abelii (Sumatran orangutan).